A 427-amino-acid polypeptide reads, in one-letter code: Enolase (427 aa).

Gln-163 is a (2R)-2-phosphoglycerate binding site. The Proton donor role is filled by Glu-205. Residues Asp-242, Glu-285, and Asp-312 each contribute to the Mg(2+) site. The (2R)-2-phosphoglycerate site is built by Lys-337, Arg-366, Ser-367, and Lys-388. Lys-337 acts as the Proton acceptor in catalysis.

The protein belongs to the enolase family. Mg(2+) serves as cofactor.

Its subcellular location is the cytoplasm. It is found in the secreted. The protein localises to the cell surface. It catalyses the reaction (2R)-2-phosphoglycerate = phosphoenolpyruvate + H2O. It functions in the pathway carbohydrate degradation; glycolysis; pyruvate from D-glyceraldehyde 3-phosphate: step 4/5. Its function is as follows. Catalyzes the reversible conversion of 2-phosphoglycerate (2-PG) into phosphoenolpyruvate (PEP). It is essential for the degradation of carbohydrates via glycolysis. The chain is Enolase from Nitrosospira multiformis (strain ATCC 25196 / NCIMB 11849 / C 71).